The sequence spans 459 residues: tRNA-guanine(15) transglycosylase (459 aa).

Asp90 functions as the Nucleophile in the catalytic mechanism. 2 residues coordinate substrate: Asp125 and Gly192. Residues Cys275, Cys277, and Cys280 each coordinate Zn(2+).

It belongs to the archaeosine tRNA-ribosyltransferase family. It depends on Zn(2+) as a cofactor.

The catalysed reaction is guanosine(15) in tRNA + 7-cyano-7-deazaguanine = 7-cyano-7-carbaguanosine(15) in tRNA + guanine. It participates in tRNA modification; archaeosine-tRNA biosynthesis. Exchanges the guanine residue with 7-cyano-7-deazaguanine (preQ0) at position 15 in the dihydrouridine loop (D-loop) of archaeal tRNAs. The chain is tRNA-guanine(15) transglycosylase from Methanopyrus kandleri (strain AV19 / DSM 6324 / JCM 9639 / NBRC 100938).